Here is a 247-residue protein sequence, read N- to C-terminus: Geranylgeranylglyceryl phosphate synthase (247 aa).

Residues D23 and S52 each contribute to the Mg(2+) site. Residues 171 to 177 (YLEAGSG), 203 to 204 (GG), and 225 to 226 (GT) each bind sn-glycerol 1-phosphate.

The protein belongs to the GGGP/HepGP synthase family. Group II subfamily. It depends on Mg(2+) as a cofactor.

Its subcellular location is the cytoplasm. It carries out the reaction sn-glycerol 1-phosphate + (2E,6E,10E)-geranylgeranyl diphosphate = sn-3-O-(geranylgeranyl)glycerol 1-phosphate + diphosphate. Its pathway is membrane lipid metabolism; glycerophospholipid metabolism. Prenyltransferase that catalyzes the transfer of the geranylgeranyl moiety of geranylgeranyl diphosphate (GGPP) to the C3 hydroxyl of sn-glycerol-1-phosphate (G1P). This reaction is the first ether-bond-formation step in the biosynthesis of archaeal membrane lipids. The polypeptide is Geranylgeranylglyceryl phosphate synthase (Methanococcoides burtonii (strain DSM 6242 / NBRC 107633 / OCM 468 / ACE-M)).